Reading from the N-terminus, the 359-residue chain is Serum paraoxonase/arylesterase 1 (359 aa).

Cys-42 and Cys-353 are disulfide-bonded. N-linked (GlcNAc...) asparagine glycosylation is present at Asn-50. Residues Glu-53 and Asp-54 each contribute to the Ca(2+) site. His-115 (proton acceptor) is an active-site residue. Positions 117, 168, 169, and 224 each coordinate Ca(2+). The N-linked (GlcNAc...) asparagine glycan is linked to Asn-253. Asp-269 and Asn-270 together coordinate Ca(2+). N-linked (GlcNAc...) asparagine glycosylation is found at Asn-270 and Asn-324.

This sequence belongs to the paraoxonase family. As to quaternary structure, homodimer. Interacts with CLU. Requires Ca(2+) as cofactor. Post-translationally, glycosylated. In terms of processing, the signal sequence is not cleaved. As to expression, plasma. Associated with HDL.

Its subcellular location is the secreted. It localises to the extracellular space. The enzyme catalyses a phenyl acetate + H2O = a phenol + acetate + H(+). It carries out the reaction An aryl dialkyl phosphate + H2O = dialkyl phosphate + an aryl alcohol.. It catalyses the reaction an N-acyl-L-homoserine lactone + H2O = an N-acyl-L-homoserine + H(+). Functionally, hydrolyzes the toxic metabolites of a variety of organophosphorus insecticides. Capable of hydrolyzing a broad spectrum of organophosphate substrates and lactones, and a number of aromatic carboxylic acid esters. Mediates an enzymatic protection of low density lipoproteins against oxidative modification. The sequence is that of Serum paraoxonase/arylesterase 1 (PON1) from Oryctolagus cuniculus (Rabbit).